The chain runs to 202 residues: Small ribosomal subunit protein uS2 (202 aa).

Belongs to the universal ribosomal protein uS2 family.

In Pyrococcus horikoshii (strain ATCC 700860 / DSM 12428 / JCM 9974 / NBRC 100139 / OT-3), this protein is Small ribosomal subunit protein uS2 (rps2).